A 1792-amino-acid polypeptide reads, in one-letter code: D-lysergyl-peptide-synthetase subunit 3 (1792 aa).

Residues phenylalanine 239 to arginine 642 form an adenylation (A) domain region. Residues serine 779–valine 853 form the Carrier domain. Residue serine 813 is modified to O-(pantetheine 4'-phosphoryl)serine. The condensation (C) domain stretch occupies residues glutamate 895–glutamate 1285. The interval valine 1415–serine 1640 is reductase (R) domain.

It belongs to the NRP synthetase family.

It participates in alkaloid biosynthesis; ergot alkaloid biosynthesis. D-lysergyl-peptide-synthetase subunit 3; part of the gene cluster that mediates the biosynthesis of fungal ergot alkaloid. DmaW catalyzes the first step of ergot alkaloid biosynthesis by condensing dimethylallyl diphosphate (DMAP) and tryptophan to form 4-dimethylallyl-L-tryptophan. The second step is catalyzed by the methyltransferase easF that methylates 4-dimethylallyl-L-tryptophan in the presence of S-adenosyl-L-methionine, resulting in the formation of 4-dimethylallyl-L-abrine. The catalase easC and the FAD-dependent oxidoreductase easE then transform 4-dimethylallyl-L-abrine to chanoclavine-I which is further oxidized by easD in the presence of NAD(+), resulting in the formation of chanoclavine-I aldehyde. Agroclavine dehydrogenase easG then mediates the conversion of chanoclavine-I aldehyde to agroclavine via a non-enzymatic adduct reaction: the substrate is an iminium intermediate that is formed spontaneously from chanoclavine-I aldehyde in the presence of glutathione. The presence of easA is not required to complete this reaction. Further conversion of agroclavine to paspalic acid is a two-step process involving oxidation of agroclavine to elymoclavine and of elymoclavine to paspalic acid, the second step being performed by the elymoclavine oxidase cloA. Paspalic acid is then further converted to D-lysergic acid. Ergopeptines are assembled from D-lysergic acid and three different amino acids by the D-lysergyl-peptide-synthetases composed each of a monomudular and a trimodular nonribosomal peptide synthetase subunit. LpsB and lpsC encode the monomodular subunits responsible for D-lysergic acid activation and incorporation into the ergopeptine backbone. LpsA1 and A2 subunits encode the trimodular nonribosomal peptide synthetase assembling the tripeptide portion of ergopeptines. LpsA1 is responsible for formation of the major ergopeptine, ergotamine, and lpsA2 for alpha-ergocryptine, the minor ergopeptine of the total alkaloid mixture elaborated by C.purpurea. D-lysergyl-tripeptides are assembled by the nonribosomal peptide synthetases and released as N-(D-lysergyl-aminoacyl)-lactams. Cyclolization of the D-lysergyl-tripeptides is performed by the Fe(2+)/2-ketoglutarate-dependent dioxygenase easH which introduces a hydroxyl group into N-(D-lysergyl-aminoacyl)-lactam at alpha-C of the aminoacyl residue followed by spontaneous condensation with the terminal lactam carbonyl group. The chain is D-lysergyl-peptide-synthetase subunit 3 from Claviceps purpurea (strain 20.1) (Ergot fungus).